The following is a 185-amino-acid chain: Ribosome-recycling factor (185 aa).

Belongs to the RRF family.

Its subcellular location is the cytoplasm. Functionally, responsible for the release of ribosomes from messenger RNA at the termination of protein biosynthesis. May increase the efficiency of translation by recycling ribosomes from one round of translation to another. This Ehrlichia ruminantium (strain Welgevonden) protein is Ribosome-recycling factor.